The sequence spans 63 residues: Synergistic-type venom protein C9S3, chain 2 (63 aa).

3 disulfide bridges follow: Cys-3-Cys-24, Cys-17-Cys-42, and Cys-46-Cys-57.

Belongs to the three-finger toxin family. Short-chain subfamily. Aminergic toxin sub-subfamily. As to quaternary structure, heterodimer of C9S3 chain 1 (AC P01408) and chain 2, linked by at least two disulfide bonds. As to expression, expressed by the venom gland.

The protein resides in the secreted. In terms of biological role, this protein shows a synergetic toxic effect in that it enhances the toxicity of other D.angusticeps toxins. The polypeptide is Synergistic-type venom protein C9S3, chain 2 (Dendroaspis angusticeps (Eastern green mamba)).